Here is a 469-residue protein sequence, read N- to C-terminus: Argininosuccinate lyase (469 aa).

Belongs to the lyase 1 family. Argininosuccinate lyase subfamily.

The protein localises to the cytoplasm. It carries out the reaction 2-(N(omega)-L-arginino)succinate = fumarate + L-arginine. Its pathway is amino-acid biosynthesis; L-arginine biosynthesis; L-arginine from L-ornithine and carbamoyl phosphate: step 3/3. The polypeptide is Argininosuccinate lyase (Cupriavidus metallidurans (strain ATCC 43123 / DSM 2839 / NBRC 102507 / CH34) (Ralstonia metallidurans)).